The sequence spans 676 residues: Zinc finger CCCH domain-containing protein 38 (676 aa).

Disordered stretches follow at residues 1-134, 172-217, 245-307, 487-506, and 533-594; these read MEMS…DHLF, SSDY…RSSN, RKQP…SWID, SVQP…NPNQ, and IQEV…DPKG. Residues 12-21 show a composition bias toward basic and acidic residues; that stretch reads SKWDSKEDTH. The span at 58 to 79 shows a compositional bias: polar residues; sequence RVSQNNDNSYFSEQDGTRQQFV. Basic and acidic residues-rich tracts occupy residues 101–110, 124–134, and 192–212; these read ARRDAGSYDR, EFNKRGSDHLF, and SEFT…EGGF. The C3H1-type zinc finger occupies 214–243; sequence RSSNIPCKFFAAGTGFCRNGKYCRFSHHVA. Over residues 251 to 262 the composition is skewed to low complexity; sequence NNNNFYRQDNNN. Basic and acidic residues predominate over residues 269 to 278; sequence KWNDVERLDN. A compositionally biased stretch (basic and acidic residues) spans 538-562; sequence LDPKENGDKKTDEASKEEEGKKTGE. The segment covering 563-583 has biased composition (acidic residues); sequence DTNDAENVVDEDEDGDDDGSD. The span at 584–594 shows a compositional bias: basic and acidic residues; the sequence is EENKKEKDPKG.

The sequence is that of Zinc finger CCCH domain-containing protein 38 from Arabidopsis thaliana (Mouse-ear cress).